A 264-amino-acid polypeptide reads, in one-letter code: Small ribosomal subunit protein uS3 (264 aa).

Residues 39 to 107 (VREFLKKKLK…PVHVNIEEIR (69 aa)) form the KH type-2 domain. Residues 211 to 264 (NDAPVVEEPQEERRKRPGRPEGRRREGEGRPGGQRRGAGAGGRRSGGADAKTGE) are disordered. Residues 221-239 (EERRKRPGRPEGRRREGEG) show a composition bias toward basic and acidic residues. The span at 240 to 255 (RPGGQRRGAGAGGRRS) shows a compositional bias: gly residues.

Belongs to the universal ribosomal protein uS3 family. As to quaternary structure, part of the 30S ribosomal subunit. Forms a tight complex with proteins S10 and S14.

Binds the lower part of the 30S subunit head. Binds mRNA in the 70S ribosome, positioning it for translation. In Ralstonia nicotianae (strain ATCC BAA-1114 / GMI1000) (Ralstonia solanacearum), this protein is Small ribosomal subunit protein uS3.